A 322-amino-acid chain; its full sequence is Pantothenate kinase (322 aa).

Residue 101-108 participates in ATP binding; sequence GSVAVGKS.

This sequence belongs to the prokaryotic pantothenate kinase family.

Its subcellular location is the cytoplasm. It catalyses the reaction (R)-pantothenate + ATP = (R)-4'-phosphopantothenate + ADP + H(+). It functions in the pathway cofactor biosynthesis; coenzyme A biosynthesis; CoA from (R)-pantothenate: step 1/5. The polypeptide is Pantothenate kinase (Psychromonas ingrahamii (strain DSM 17664 / CCUG 51855 / 37)).